We begin with the raw amino-acid sequence, 121 residues long: Large ribosomal subunit protein eL18 (121 aa).

This sequence belongs to the eukaryotic ribosomal protein eL18 family.

This chain is Large ribosomal subunit protein eL18, found in Methanocaldococcus jannaschii (strain ATCC 43067 / DSM 2661 / JAL-1 / JCM 10045 / NBRC 100440) (Methanococcus jannaschii).